A 118-amino-acid polypeptide reads, in one-letter code: Non-specific lipid-transfer protein 2 (118 aa).

Residues 1 to 25 (MAGVMKLACMVLACMIVAGPITANA) form the signal peptide. Cystine bridges form between cysteine 29/cysteine 76, cysteine 39/cysteine 53, cysteine 54/cysteine 100, and cysteine 74/cysteine 114.

This sequence belongs to the plant LTP family.

Functionally, plant non-specific lipid-transfer proteins transfer phospholipids as well as galactolipids across membranes. May play a role in wax or cutin deposition in the cell walls of expanding epidermal cells and certain secretory tissues. This Arabidopsis thaliana (Mouse-ear cress) protein is Non-specific lipid-transfer protein 2 (LTP2).